Consider the following 504-residue polypeptide: 2-isopropylmalate synthase (504 aa).

Residues 6-267 (IIIFDTTLRD…YTGIISKEIY (262 aa)) form the Pyruvate carboxyltransferase domain. Aspartate 15, histidine 201, histidine 203, and asparagine 237 together coordinate Mn(2+). The regulatory domain stretch occupies residues 391-504 (EITDLLQSSG…LNSYLRIHKN (114 aa)).

It belongs to the alpha-IPM synthase/homocitrate synthase family. LeuA type 1 subfamily. In terms of assembly, homodimer. The cofactor is Mn(2+).

It is found in the cytoplasm. It carries out the reaction 3-methyl-2-oxobutanoate + acetyl-CoA + H2O = (2S)-2-isopropylmalate + CoA + H(+). Its pathway is amino-acid biosynthesis; L-leucine biosynthesis; L-leucine from 3-methyl-2-oxobutanoate: step 1/4. Catalyzes the condensation of the acetyl group of acetyl-CoA with 3-methyl-2-oxobutanoate (2-ketoisovalerate) to form 3-carboxy-3-hydroxy-4-methylpentanoate (2-isopropylmalate). In Campylobacter concisus (strain 13826), this protein is 2-isopropylmalate synthase.